The sequence spans 254 residues: 3-dehydroquinate dehydratase (254 aa).

3-dehydroquinate contacts are provided by residues 47–49 and Arg83; that span reads EWR. The active-site Proton donor/acceptor is the His144. Lys171 (schiff-base intermediate with substrate) is an active-site residue. Residues Arg214, Ser233, and Gln237 each contribute to the 3-dehydroquinate site.

The protein belongs to the type-I 3-dehydroquinase family. As to quaternary structure, homodimer.

It carries out the reaction 3-dehydroquinate = 3-dehydroshikimate + H2O. The protein operates within metabolic intermediate biosynthesis; chorismate biosynthesis; chorismate from D-erythrose 4-phosphate and phosphoenolpyruvate: step 3/7. Its function is as follows. Involved in the third step of the chorismate pathway, which leads to the biosynthesis of aromatic amino acids. Catalyzes the cis-dehydration of 3-dehydroquinate (DHQ) and introduces the first double bond of the aromatic ring to yield 3-dehydroshikimate. This Bacillus licheniformis (strain ATCC 14580 / DSM 13 / JCM 2505 / CCUG 7422 / NBRC 12200 / NCIMB 9375 / NCTC 10341 / NRRL NRS-1264 / Gibson 46) protein is 3-dehydroquinate dehydratase.